The sequence spans 353 residues: Methionine import ATP-binding protein MetN (353 aa).

Residues 8–249 (LDQIDVTFHQ…PKQPLTQDFI (242 aa)) form the ABC transporter domain. ATP is bound at residue 42–49 (GYSGAGKS).

It belongs to the ABC transporter superfamily. Methionine importer (TC 3.A.1.24) family. In terms of assembly, the complex is composed of two ATP-binding proteins (MetN), two transmembrane proteins (MetI) and a solute-binding protein (MetQ).

It is found in the cell membrane. The catalysed reaction is L-methionine(out) + ATP + H2O = L-methionine(in) + ADP + phosphate + H(+). It carries out the reaction D-methionine(out) + ATP + H2O = D-methionine(in) + ADP + phosphate + H(+). Its function is as follows. Part of the ABC transporter complex MetNIQ involved in methionine import. Responsible for energy coupling to the transport system. This chain is Methionine import ATP-binding protein MetN, found in Streptococcus pneumoniae (strain ATCC BAA-255 / R6).